Reading from the N-terminus, the 417-residue chain is Glutamate-1-semialdehyde 2,1-aminomutase (417 aa).

An N6-(pyridoxal phosphate)lysine modification is found at lysine 267.

This sequence belongs to the class-III pyridoxal-phosphate-dependent aminotransferase family. HemL subfamily. As to quaternary structure, homodimer. Pyridoxal 5'-phosphate is required as a cofactor.

It localises to the cytoplasm. The catalysed reaction is (S)-4-amino-5-oxopentanoate = 5-aminolevulinate. It functions in the pathway porphyrin-containing compound metabolism; protoporphyrin-IX biosynthesis; 5-aminolevulinate from L-glutamyl-tRNA(Glu): step 2/2. The chain is Glutamate-1-semialdehyde 2,1-aminomutase from Solibacter usitatus (strain Ellin6076).